The chain runs to 179 residues: Bifunctional protein PyrR (179 aa).

Residues 99–111 (VILVDDVLYTGRT) carry the PRPP-binding motif.

This sequence belongs to the purine/pyrimidine phosphoribosyltransferase family. PyrR subfamily. In terms of assembly, homodimer and homohexamer; in equilibrium.

The catalysed reaction is UMP + diphosphate = 5-phospho-alpha-D-ribose 1-diphosphate + uracil. Its function is as follows. Regulates transcriptional attenuation of the pyrimidine nucleotide (pyr) operon by binding in a uridine-dependent manner to specific sites on pyr mRNA. This disrupts an antiterminator hairpin in the RNA and favors formation of a downstream transcription terminator, leading to a reduced expression of downstream genes. Functionally, also displays a weak uracil phosphoribosyltransferase activity which is not physiologically significant. The sequence is that of Bifunctional protein PyrR from Limosilactobacillus fermentum (strain NBRC 3956 / LMG 18251) (Lactobacillus fermentum).